The primary structure comprises 180 residues: Cell division protein SepF (180 aa).

The segment at Met-1–Gly-66 is disordered. Over residues Ala-12–Gly-23 the composition is skewed to acidic residues. Over residues Tyr-24–Asn-57 the composition is skewed to low complexity.

This sequence belongs to the SepF family. Homodimer. Interacts with FtsZ.

It localises to the cytoplasm. Its function is as follows. Cell division protein that is part of the divisome complex and is recruited early to the Z-ring. Probably stimulates Z-ring formation, perhaps through the cross-linking of FtsZ protofilaments. Its function overlaps with FtsA. The protein is Cell division protein SepF of Oenococcus oeni (strain ATCC BAA-331 / PSU-1).